The sequence spans 552 residues: Probable inorganic phosphate transporter 1-10 (552 aa).

The Cytoplasmic segment spans residues 1 to 22 (MAPIGVLTALDQARTQYYHFKA). Residues 23–43 (IVIAGMGLFTDSYDLFCIAPV) form a helical membrane-spanning segment. At 44–68 (MKIVGRVYYSDGGARPGVTPPAVVS) the chain is on the extracellular side. The helical transmembrane segment at 69 to 89 (ATVGVALLGAVIGNVVFGALG) threads the bilayer. The Cytoplasmic portion of the chain corresponds to 90–96 (DRVGRRR). Residues 97–117 (VYGACLLLMVCSSVGSGFSVC) traverse the membrane as a helical segment. The Extracellular portion of the chain corresponds to 118 to 123 (RTRRCA). A helical transmembrane segment spans residues 124–144 (LASLCFFRFLLGVGVGGDYPL). Residues 145-158 (SATIMSEFANRRTR) are Cytoplasmic-facing. The helical transmembrane segment at 159 to 179 (GAFIAAVFSMQGFGILASSAV) threads the bilayer. Residues 180–203 (TMAVAAAFDHYTGYPAPLDTPECA) are Extracellular-facing. Residues 204–224 (DLAWRIILMAGAVPAALTYYW) traverse the membrane as a helical segment. The Cytoplasmic portion of the chain corresponds to 225-295 (RMSMPETARY…RRFVRQHGRD (71 aa)). Residues 296 to 316 (LFACAAAWFLLDIPYYSSTLF) form a helical membrane-spanning segment. The Extracellular segment spans residues 317 to 342 (QSQIYRPLFPAPGLINAFQEAFNVAK). The chain crosses the membrane as a helical span at residues 343–363 (FQAVIAVASTIPGYFVAVLLI). Over 364 to 369 (DRVGRR) the chain is Cytoplasmic. A helical transmembrane segment spans residues 370 to 390 (CLQMAGFLLMAVFLFALAGPY). The Extracellular portion of the chain corresponds to 391–397 (DGYWRDH). Residues 398–418 (GAHAGYIVLYSLTFFSANLGP) form a helical membrane-spanning segment. Topologically, residues 419–439 (NTTTFILPAELFPARFRSTCH) are cytoplasmic. Residues 440–460 (GLSGAAGKLGALVGSIGFLWA) traverse the membrane as a helical segment. The Extracellular portion of the chain corresponds to 461–473 (SQQKDGAAAGHLP). The chain crosses the membrane as a helical span at residues 474 to 494 (GIGMMYALFVLGGICLLGLAL). Topologically, residues 495 to 552 (TYVFTPETMMRSLEENESDRAQTQVGDGGSDTEAAKSPASMASSHLSMSPILPARVSV) are cytoplasmic. The segment at 507-540 (LEENESDRAQTQVGDGGSDTEAAKSPASMASSHL) is disordered.

The protein belongs to the major facilitator superfamily. Phosphate:H(+) symporter (TC 2.A.1.9) family. As to expression, expressed at low levels in roots.

It is found in the membrane. In terms of biological role, high-affinity transporter for external inorganic phosphate. This Oryza sativa subsp. japonica (Rice) protein is Probable inorganic phosphate transporter 1-10 (PHT1-10).